A 148-amino-acid chain; its full sequence is 3-dehydroquinate dehydratase (148 aa).

Tyr-22 functions as the Proton acceptor in the catalytic mechanism. Asn-73, His-79, and Asp-86 together coordinate substrate. The active-site Proton donor is the His-99. Residues 100 to 101 and Arg-110 each bind substrate; that span reads LS.

It belongs to the type-II 3-dehydroquinase family. In terms of assembly, homododecamer.

It catalyses the reaction 3-dehydroquinate = 3-dehydroshikimate + H2O. It participates in metabolic intermediate biosynthesis; chorismate biosynthesis; chorismate from D-erythrose 4-phosphate and phosphoenolpyruvate: step 3/7. Functionally, catalyzes a trans-dehydration via an enolate intermediate. The sequence is that of 3-dehydroquinate dehydratase from Jannaschia sp. (strain CCS1).